Consider the following 130-residue polypeptide: DNA-directed RNA polymerase subunit omega (130 aa).

Residues 110-130 (EELLKGLEGLAPPEEQPEEDE) are disordered.

This sequence belongs to the RNA polymerase subunit omega family. The RNAP catalytic core consists of 2 alpha, 1 beta, 1 beta' and 1 omega subunit. When a sigma factor is associated with the core the holoenzyme is formed, which can initiate transcription.

It carries out the reaction RNA(n) + a ribonucleoside 5'-triphosphate = RNA(n+1) + diphosphate. Promotes RNA polymerase assembly. Latches the N- and C-terminal regions of the beta' subunit thereby facilitating its interaction with the beta and alpha subunits. In Rhodopseudomonas palustris (strain HaA2), this protein is DNA-directed RNA polymerase subunit omega.